The chain runs to 459 residues: Serine protease HTRA3 (459 aa).

Residues 1–23 (MQARALLPATLATLATLAVSVLA) form the signal peptide. An IGFBP N-terminal domain is found at 27 to 90 (PAAPCPARCD…ECVRGVCRCR (64 aa)). Disulfide bonds link Cys-31-Cys-54, Cys-35-Cys-56, Cys-40-Cys-57, Cys-45-Cys-60, Cys-68-Cys-82, Cys-76-Cys-87, Cys-89-Cys-107, and Cys-96-Cys-132. Positions 76-134 (CGDSLECVRGVCRCRWTHTVCGTDGHTYADVCALQAASRRALQISGTPVRQLQKGACPS) constitute a Kazal-like domain. A serine protease region spans residues 181-346 (GSGFIMSEAG…AIPSDRITRF (166 aa)). Active-site charge relay system residues include His-197, Asp-233, and Ser-311. Residues 365-450 (IRMRTITPSL…EVRRGNDDLL (86 aa)) form the PDZ domain.

This sequence belongs to the peptidase S1C family. Homotrimer. Interacts with TGFB1; the interaction inhibits TGFB-mediated signaling. Interacts with BMP4; the interaction inhibits BMP4-mediated signaling. Interacts with TGFB2, GDF5 and MYH9. As to expression, expressed in the ovary, essentially in granulosa cells in a follicle-stage specific manner. Highest levels found in large luteinizing granulosa cells.

The protein localises to the secreted. Its function is as follows. Serine protease that cleaves beta-casein/CSN2 as well as several extracellular matrix (ECM) proteoglycans such as decorin/DCN, biglycan/BGN and fibronectin/FN1. Inhibits signaling mediated by TGF-beta family proteins possibly indirectly by degradation of these ECM proteoglycans. May act as a tumor suppressor. Negatively regulates, in vitro, trophoblast invasion during placental development and may be involved in the development of the placenta in vivo. May also have a role in ovarian development, granulosa cell differentiation and luteinization. The polypeptide is Serine protease HTRA3 (Htra3) (Rattus norvegicus (Rat)).